The sequence spans 152 residues: Superoxide dismutase [Cu-Zn] 1 (152 aa).

The Cu cation site is built by His45, His47, and His62. Cys56 and Cys145 form a disulfide bridge. Zn(2+)-binding residues include His62, His70, His79, and Asp82. His119 contacts Cu cation.

The protein belongs to the Cu-Zn superoxide dismutase family. Homodimer. Cu cation is required as a cofactor. Requires Zn(2+) as cofactor.

It localises to the cytoplasm. The catalysed reaction is 2 superoxide + 2 H(+) = H2O2 + O2. Destroys radicals which are normally produced within the cells and which are toxic to biological systems. The protein is Superoxide dismutase [Cu-Zn] 1 (SODCC.1) of Solanum lycopersicum (Tomato).